The chain runs to 122 residues: Large ribosomal subunit protein uL14 (122 aa).

The protein belongs to the universal ribosomal protein uL14 family. Part of the 50S ribosomal subunit. Forms a cluster with proteins L3 and L19. In the 70S ribosome, L14 and L19 interact and together make contacts with the 16S rRNA in bridges B5 and B8.

Functionally, binds to 23S rRNA. Forms part of two intersubunit bridges in the 70S ribosome. This Methylobacillus flagellatus (strain ATCC 51484 / DSM 6875 / VKM B-1610 / KT) protein is Large ribosomal subunit protein uL14.